The sequence spans 138 residues: Small ribosomal subunit protein uS11c (138 aa).

Residues 1-21 form a disordered region; it reads MAKSIPKIGSRKTGRIGSRKH. Residues 9 to 21 show a composition bias toward basic residues; that stretch reads GSRKTGRIGSRKH.

This sequence belongs to the universal ribosomal protein uS11 family. In terms of assembly, part of the 30S ribosomal subunit.

It is found in the plastid. It localises to the chloroplast. In Pisum sativum (Garden pea), this protein is Small ribosomal subunit protein uS11c.